Reading from the N-terminus, the 318-residue chain is Acetyl-coenzyme A carboxylase carboxyl transferase subunit alpha (318 aa).

The 255-residue stretch at 38–292 (KLEKRLAKLE…NKTITKSLHA (255 aa)) folds into the CoA carboxyltransferase C-terminal domain.

It belongs to the AccA family. As to quaternary structure, acetyl-CoA carboxylase is a heterohexamer composed of biotin carboxyl carrier protein (AccB), biotin carboxylase (AccC) and two subunits each of ACCase subunit alpha (AccA) and ACCase subunit beta (AccD).

It localises to the cytoplasm. The enzyme catalyses N(6)-carboxybiotinyl-L-lysyl-[protein] + acetyl-CoA = N(6)-biotinyl-L-lysyl-[protein] + malonyl-CoA. Its pathway is lipid metabolism; malonyl-CoA biosynthesis; malonyl-CoA from acetyl-CoA: step 1/1. Functionally, component of the acetyl coenzyme A carboxylase (ACC) complex. First, biotin carboxylase catalyzes the carboxylation of biotin on its carrier protein (BCCP) and then the CO(2) group is transferred by the carboxyltransferase to acetyl-CoA to form malonyl-CoA. The sequence is that of Acetyl-coenzyme A carboxylase carboxyl transferase subunit alpha from Listeria innocua serovar 6a (strain ATCC BAA-680 / CLIP 11262).